The chain runs to 85 residues: UPF0386 protein RHE_CH01859 (85 aa).

The protein belongs to the UPF0386 family.

The protein is UPF0386 protein RHE_CH01859 of Rhizobium etli (strain ATCC 51251 / DSM 11541 / JCM 21823 / NBRC 15573 / CFN 42).